The sequence spans 223 residues: Noggin-3 (223 aa).

Positions 1–23 (MDNIPYFLATVLIFSLGFRIEEG) are cleaved as a signal peptide. 2 N-linked (GlcNAc...) asparagine glycosylation sites follow: N60 and N93.

The protein belongs to the noggin family. Homodimer; disulfide-linked.

The protein localises to the secreted. Functionally, may function as an inhibitor of bone morphogenetic proteins (BMP) signaling during later stages of development including late phases of dorsoventral patterning, to refine the early pattern set up by the interaction of chordino and BMP2/4. Not involved in organizer function or early phases of dorsoventral pattern formation. This is Noggin-3 (nog3) from Danio rerio (Zebrafish).